The chain runs to 245 residues: 1-(5-phosphoribosyl)-5-[(5-phosphoribosylamino)methylideneamino] imidazole-4-carboxamide isomerase (245 aa).

Asp7 serves as the catalytic Proton acceptor. Residue Asp129 is the Proton donor of the active site.

It belongs to the HisA/HisF family.

The protein localises to the cytoplasm. The catalysed reaction is 1-(5-phospho-beta-D-ribosyl)-5-[(5-phospho-beta-D-ribosylamino)methylideneamino]imidazole-4-carboxamide = 5-[(5-phospho-1-deoxy-D-ribulos-1-ylimino)methylamino]-1-(5-phospho-beta-D-ribosyl)imidazole-4-carboxamide. The protein operates within amino-acid biosynthesis; L-histidine biosynthesis; L-histidine from 5-phospho-alpha-D-ribose 1-diphosphate: step 4/9. In Proteus mirabilis (strain HI4320), this protein is 1-(5-phosphoribosyl)-5-[(5-phosphoribosylamino)methylideneamino] imidazole-4-carboxamide isomerase.